The sequence spans 664 residues: Intraflagellar transport protein 70A (664 aa).

7 TPR repeats span residues 11–44 (DGEFTAVVYRLIRDARYAEAVQLLGGELQRSPRS), 45–78 (RAGLSLLGYCYYRLQEFALAAECYEQLRQLHPEL), 153–186 (LDGQVNLGCLLYKEGHYEAACSKFSAALQASGYR), 188–220 (DLSYNLALAYFSSRQYASALKHIVEIIEHGIRQ), 392–423 (LTKQVQEARHNKDDEAIKKAENEYDDTLEKYI), 424–456 (PVLMAQAKIYWNLENYPMVEKIFRKSVEFCNDH), and 458–491 (VWKLNVAHVLFMQENKYKEAIGFYEPIVKKHYDN). The stretch at 507–534 (YIMTSQNEEAEELMRKIEKEEEQLSYDD) forms a coiled coil. A TPR 8 repeat occupies 543–576 (CIVNLVIGTLYCAKGNYDFGISRVIKSLEPYNKK).

This sequence belongs to the TTC30/dfy-1/fleer family.

Its subcellular location is the cell projection. The protein localises to the cilium. Functionally, required for polyglutamylation of axonemal tubulin. Plays a role in anterograde intraflagellar transport (IFT), the process by which cilia precursors are transported from the base of the cilium to the site of their incorporation at the tip. This is Intraflagellar transport protein 70A (IFT70A) from Bos taurus (Bovine).